Here is a 169-residue protein sequence, read N- to C-terminus: Disulfide bond formation protein B (169 aa).

The Cytoplasmic portion of the chain corresponds to methionine 1–serine 13. A helical membrane pass occupies residues tryptophan 14–tyrosine 30. Over phenylalanine 31–valine 48 the chain is Periplasmic. A disulfide bridge links cysteine 40 with cysteine 43. Residues alanine 49–proline 64 form a helical membrane-spanning segment. Topologically, residues alanine 65 to alanine 71 are cytoplasmic. The chain crosses the membrane as a helical span at residues leucine 72–leucine 89. Over glutamate 90–glutamate 144 the chain is Periplasmic. The cysteines at positions 104 and 130 are disulfide-linked. The chain crosses the membrane as a helical span at residues tryptophan 145 to proline 163. The Cytoplasmic portion of the chain corresponds to methionine 164 to alanine 169.

It belongs to the DsbB family.

The protein resides in the cell inner membrane. In terms of biological role, required for disulfide bond formation in some periplasmic proteins. Acts by oxidizing the DsbA protein. The sequence is that of Disulfide bond formation protein B from Shewanella amazonensis (strain ATCC BAA-1098 / SB2B).